A 145-amino-acid polypeptide reads, in one-letter code: Transcriptional regulator SlyA (145 aa).

Residues 2–135 form the HTH marR-type domain; it reads ELPLGSDLAR…LALLVARLEK (134 aa). The H-T-H motif DNA-binding region spans 49-72; the sequence is QIQLAKAIGIEQPSLVRTLDQLEE.

This sequence belongs to the SlyA family. Homodimer.

Functionally, transcription regulator that can specifically activate or repress expression of target genes. The chain is Transcriptional regulator SlyA from Pectobacterium carotovorum subsp. carotovorum (strain PC1).